Here is a 583-residue protein sequence, read N- to C-terminus: Laminarase-resistance protein LRE1 (583 aa).

The span at 1 to 24 (MPNTHTQHVQISEPNPVNTLSTPS) shows a compositional bias: polar residues. Disordered regions lie at residues 1–31 (MPNTHTQHVQISEPNPVNTLSTPSKRGHRHR) and 330–380 (LKDN…HMQH). Basic and acidic residues-rich tracts occupy residues 332-342 (DNPRYAKDGYP) and 354-366 (LDSDKRQDFSGES). A phosphoserine mark is found at S393 and S398. A disordered region spans residues 457 to 486 (SCTPDGKEEMNRLKSNDSNEYSKSEGQIRT). A compositionally biased stretch (basic and acidic residues) spans 461 to 479 (DGKEEMNRLKSNDSNEYSK). Phosphoserine occurs at positions 516 and 552.

Phosphorylated by CDC28/CDK1.

Its function is as follows. Overexpression affects chitinase expression, cell separation and budding pattern, and increases trehalose accumulation and heat resistance by inhibiting protein kinase CBK1. Overexpression also suppresses temperature-induced hyperosmosensitivity and sensitivity to cell wall degrading enzymes. Overexpression of both LRE1 and PBN1 confers resistance to laminarinase. This Saccharomyces cerevisiae (strain ATCC 204508 / S288c) (Baker's yeast) protein is Laminarase-resistance protein LRE1 (LRE1).